Consider the following 134-residue polypeptide: Small ribosomal subunit protein uS8 (134 aa).

Belongs to the universal ribosomal protein uS8 family. As to quaternary structure, part of the 30S ribosomal subunit. Contacts proteins S5 and S12.

Functionally, one of the primary rRNA binding proteins, it binds directly to 16S rRNA central domain where it helps coordinate assembly of the platform of the 30S subunit. This chain is Small ribosomal subunit protein uS8, found in Petrotoga mobilis (strain DSM 10674 / SJ95).